Reading from the N-terminus, the 357-residue chain is Alanine racemase (357 aa).

Lys33 acts as the Proton acceptor; specific for D-alanine in catalysis. Lys33 carries the N6-(pyridoxal phosphate)lysine modification. Position 130 (Arg130) interacts with substrate. Tyr252 (proton acceptor; specific for L-alanine) is an active-site residue. Residue Met300 participates in substrate binding.

Belongs to the alanine racemase family. Requires pyridoxal 5'-phosphate as cofactor.

The enzyme catalyses L-alanine = D-alanine. It participates in amino-acid biosynthesis; D-alanine biosynthesis; D-alanine from L-alanine: step 1/1. Its function is as follows. Catalyzes the interconversion of L-alanine and D-alanine. May also act on other amino acids. The chain is Alanine racemase (alr) from Acidiphilium cryptum (strain JF-5).